The primary structure comprises 404 residues: Cysteine desulfurase IscS (404 aa).

Residues 75–76, Asn155, Gln183, and 203–205 contribute to the pyridoxal 5'-phosphate site; these read AT and SAH. Lys206 is modified (N6-(pyridoxal phosphate)lysine). Residue Thr243 participates in pyridoxal 5'-phosphate binding. The Cysteine persulfide intermediate role is filled by Cys328. Cys328 lines the [2Fe-2S] cluster pocket.

It belongs to the class-V pyridoxal-phosphate-dependent aminotransferase family. NifS/IscS subfamily. Homodimer. Forms a heterotetramer with IscU, interacts with other sulfur acceptors. The cofactor is pyridoxal 5'-phosphate.

It localises to the cytoplasm. It carries out the reaction (sulfur carrier)-H + L-cysteine = (sulfur carrier)-SH + L-alanine. The protein operates within cofactor biosynthesis; iron-sulfur cluster biosynthesis. Functionally, master enzyme that delivers sulfur to a number of partners involved in Fe-S cluster assembly, tRNA modification or cofactor biosynthesis. Catalyzes the removal of elemental sulfur atoms from cysteine to produce alanine. Functions as a sulfur delivery protein for Fe-S cluster synthesis onto IscU, an Fe-S scaffold assembly protein, as well as other S acceptor proteins. This chain is Cysteine desulfurase IscS, found in Aeromonas hydrophila subsp. hydrophila (strain ATCC 7966 / DSM 30187 / BCRC 13018 / CCUG 14551 / JCM 1027 / KCTC 2358 / NCIMB 9240 / NCTC 8049).